A 428-amino-acid chain; its full sequence is tRNA(Ile)-lysidine synthase (428 aa).

28–33 is a binding site for ATP; sequence SGGVDS.

It belongs to the tRNA(Ile)-lysidine synthase family.

It localises to the cytoplasm. It carries out the reaction cytidine(34) in tRNA(Ile2) + L-lysine + ATP = lysidine(34) in tRNA(Ile2) + AMP + diphosphate + H(+). In terms of biological role, ligates lysine onto the cytidine present at position 34 of the AUA codon-specific tRNA(Ile) that contains the anticodon CAU, in an ATP-dependent manner. Cytidine is converted to lysidine, thus changing the amino acid specificity of the tRNA from methionine to isoleucine. This chain is tRNA(Ile)-lysidine synthase, found in Streptococcus pyogenes serotype M1.